Reading from the N-terminus, the 960-residue chain is MLPRLFLTILPVCSPSISNKTSKKFRDAHANHVFLFEMDLNNTLSFFGKQLKLDTEEEISKVIDQIRKHLNLEVLDFRGNTLSVLAGKLIAESLKTRRELKECIWSDMFTGRLKDEIPLVLDALGEALTASGCRLTTLDLSDNAFGAGLSTSLYNFLQSPALYSLENLILNNNGLGLAGKTVGKALCSLIDASKKAGTPLKLKKFVCGRNRLEVESTIALSDAFIKLGTLEEIRLPQNGIRDDGIIALAEAFRMNKKLRIIDINDNFCCPEGAIQISEVLSDLQFIEVLDLGDCVCDDPGVLAIIAELDKINRDCLKKVVLSGNNITSDVIDEIGACFNSPKMCHVKVDISVNMFGKDFDSAKARHGKGNIDFGRRGDDELLSSDEEEEQGAEDASMEEDAFNTSRETVIDRSNLHEASADEMMNDLMNKGFGCMKIEDNQQNSNGNGMVSFLDKSLKLDTAESAEPVVKVIAAASSMKALELRGNTLGIAAGNVIAKALESHPELERCLWSDLFTGRLKNEIPPILEALGKAMMTAGCKIKELDLSDNAFGPIGADALKDLLESPSSFSLEVLKLNNNGLGIGGKQIAKSLTECLRKSIAVGGENRLRLKTFIAGRNRLENPGAHALAATFKALETVEWFDVRQNGIHEEGIRALVAALKHNRNLRYLWLEDNTVLPKGAKALAKTLESWPKLEVLNLSDCLIRDAGCNYIIDHLNPQHHRHLKNVYLCGNELTPPVAKLLIQKWSKFDGLTPKPVLHIHTNSFGDEFSDVAGMAPENVNVGDEDDDLGSLDGDQEEYNSKSSDSEDADLDDDDEDDDEEAEIQIIDNGESQLKLAMDRIDRLDIDFESRFQEDTARVILQLSAPLKSCKMSEPALQRAIEVAENIVRRVESVKRNPIPATTQLVNNIVAQCAGTGVKAETDWGYGADPQVISRLFSELVARGHFKLELALLQRFFPSQ.

LRR repeat units lie at residues 69–92 (HLNLEVLDFRGNTLSVLAGKLIAE), 132–156 (GCRLTTLDLSDNAFGAGLSTSLYNF), 162–185 (LYSLENLILNNNGLGLAGKTVGKA), 227–254 (LGTLEEIRLPQNGIRDDGIIALAEAFRM), and 313–340 (RDCLKKVVLSGNNITSDVIDEIGACFNS). Positions 370-408 (NIDFGRRGDDELLSSDEEEEQGAEDASMEEDAFNTSRET) are disordered. The segment covering 380-401 (ELLSSDEEEEQGAEDASMEEDA) has biased composition (acidic residues). 4 LRR repeats span residues 475–498 (ASSMKALELRGNTLGIAAGNVIAK), 538–561 (GCKIKELDLSDNAFGPIGADALKD), 568–595 (SFSLEVLKLNNNGLGIGGKQIAKSLTEC), and 663–685 (NRNLRYLWLEDNTVLPKGAKALA). A disordered region spans residues 777–819 (PENVNVGDEDDDLGSLDGDQEEYNSKSSDSEDADLDDDDEDDD). 2 stretches are compositionally biased toward acidic residues: residues 783–798 (GDEDDDLGSLDGDQEE) and 806–819 (SEDADLDDDDEDDD).

The protein resides in the nucleus. Functionally, GTPase system comprising ran-1, ran-2 and ran-3 is essential in nucleocytoplasmic trafficking. Ran-2 is a GTPase activator for the nuclear RAS-related regulatory protein Ran, converting it to the putatively inactive GDP-bound state. Required for correct chromosome alignment and segregation on the metaphase plate. The polypeptide is Ran GTPase-activating protein 2 (ran-2) (Caenorhabditis elegans).